Here is a 430-residue protein sequence, read N- to C-terminus: Tol-Pal system protein TolB (430 aa).

Residues 1 to 21 (MKQAFRVALGFLVLWASVLHA) form the signal peptide.

It belongs to the TolB family. In terms of assembly, the Tol-Pal system is composed of five core proteins: the inner membrane proteins TolA, TolQ and TolR, the periplasmic protein TolB and the outer membrane protein Pal. They form a network linking the inner and outer membranes and the peptidoglycan layer.

Its subcellular location is the periplasm. Functionally, part of the Tol-Pal system, which plays a role in outer membrane invagination during cell division and is important for maintaining outer membrane integrity. TolB occupies a key intermediary position in the Tol-Pal system because it communicates directly with both membrane-embedded components, Pal in the outer membrane and TolA in the inner membrane. This chain is Tol-Pal system protein TolB, found in Yersinia pestis.